Here is a 187-residue protein sequence, read N- to C-terminus: Orotate phosphoribosyltransferase (187 aa).

Residue 110–118 (EDVVTTGGS) participates in 5-phospho-alpha-D-ribose 1-diphosphate binding. Orotate-binding residues include Thr-114 and Arg-142.

Belongs to the purine/pyrimidine phosphoribosyltransferase family. PyrE subfamily. In terms of assembly, homodimer. Requires Mg(2+) as cofactor.

The enzyme catalyses orotidine 5'-phosphate + diphosphate = orotate + 5-phospho-alpha-D-ribose 1-diphosphate. The protein operates within pyrimidine metabolism; UMP biosynthesis via de novo pathway; UMP from orotate: step 1/2. Its function is as follows. Catalyzes the transfer of a ribosyl phosphate group from 5-phosphoribose 1-diphosphate to orotate, leading to the formation of orotidine monophosphate (OMP). This Thermotoga neapolitana (strain ATCC 49049 / DSM 4359 / NBRC 107923 / NS-E) protein is Orotate phosphoribosyltransferase.